A 451-amino-acid polypeptide reads, in one-letter code: Magnesium transporter MgtE (451 aa).

Topologically, residues 1 to 285 (MVQNMTYDEL…TKAYVAAYRR (285 aa)) are cytoplasmic. Mg(2+) is bound by residues Asp64 and Asp96. 2 consecutive CBS domains span residues 140–203 (MTNR…VQDL) and 204–260 (MFTR…EADE). Mg(2+)-binding residues include Glu218, Asp228, Asp249, Asp252, Glu257, Glu260, and Asp261. Residues 286-306 (LPWLILLLFIGLISGSIISYF) traverse the membrane as a helical segment. The Extracellular segment spans residues 307-311 (EDALK). Residues 312–332 (QVVALAFFMPMVSGMTGNTGT) form a helical membrane-spanning segment. Residues 333–371 (QSLAVVIRGLSKEEMNKKTIVRLIFREFRTSIFIGAVCS) lie on the Cytoplasmic side of the membrane. The next 2 helical transmembrane spans lie at 372-392 (VLIAIVSIIWQGNALLGFVVA) and 393-413 (SSLFLTLIIGTMSGTIIPIIL). The Cytoplasmic segment spans residues 414–427 (HKLKVDPAIASGPL). Mg(2+) contacts are provided by Asp419 and Asp433. A helical membrane pass occupies residues 428–448 (ITTLNDILSLLIYFGIATAFI). Residues 449–451 (HSL) are Extracellular-facing.

It belongs to the SLC41A transporter family. As to quaternary structure, homodimer.

It localises to the cell membrane. It carries out the reaction Mg(2+)(in) = Mg(2+)(out). Binds cyclic di-AMP (c-di-AMP), which may regulate the transporter activity. Functionally, acts as a magnesium transporter. MgtE is the dominant transporter under rich-medium growth conditions, and it may provide the primary route of magnesium import in B.subtilis, while the other putative transport proteins are likely to be utilized for more-specialized growth conditions. This is Magnesium transporter MgtE from Bacillus subtilis (strain 168).